Reading from the N-terminus, the 151-residue chain is 3-dehydroquinate dehydratase (151 aa).

Tyr-24 (proton acceptor) is an active-site residue. Residues Asn-76, His-82, and Asp-89 each contribute to the substrate site. The active-site Proton donor is His-102. Substrate-binding positions include Val-103–Ser-104 and Arg-113.

The protein belongs to the type-II 3-dehydroquinase family. As to quaternary structure, homododecamer.

It catalyses the reaction 3-dehydroquinate = 3-dehydroshikimate + H2O. It participates in metabolic intermediate biosynthesis; chorismate biosynthesis; chorismate from D-erythrose 4-phosphate and phosphoenolpyruvate: step 3/7. Its function is as follows. Catalyzes a trans-dehydration via an enolate intermediate. The sequence is that of 3-dehydroquinate dehydratase from Rhodopseudomonas palustris (strain HaA2).